A 494-amino-acid polypeptide reads, in one-letter code: MRLTPNYDYEVSSINKKKRGYIVQIIGPVLDVAFSPGMMPSIYNALVVQGRHNQEPNVTCEVQQLLGNNRVRAVAMSDTDGLMRGMEVIDTGTPISVPVGGSTLGRIFNVLGEPVDQLGPVETNQLSPIHRSAPPFLKLDTRLSIFETGIKVVDLLAPYRRGGKVGLFGGAGVGKTVLIMELINNIAKAYGGVSVFGGVGERTREGNDLYMEMKESGVINQQKLDESKVALVYGQMNEPPGARMRVGLTALTMAEYFRDVNRQDVLLFIDNIFRFVQAGSEVSALLGRMPSAVGYQPTLSTEMGSLQERITSTKEGSITSIQAVYVPADDLTDPAPATTFAHLDATTVLSRSLAAKGIYPAVDPLDSTSMMLQPQIVGEQHYKTAQRVKQTLQRYKELQDIIAILGLDELSDDDRLTVARARKIERFLSQPFFVAEIFTGSPGKYVSLAETIRGCTLILSGEFDDLPEQAFYLVGTIDEVNAKAMLEEEKNFTK.

ATP is bound at residue 169-176; sequence GGAGVGKT.

Belongs to the ATPase alpha/beta chains family. As to quaternary structure, F-type ATPases have 2 components, CF(1) - the catalytic core - and CF(0) - the membrane proton channel. CF(1) has five subunits: alpha(3), beta(3), gamma(1), delta(1), epsilon(1). CF(0) has four main subunits: a(1), b(1), b'(1) and c(9-12).

It is found in the plastid thylakoid membrane. The catalysed reaction is ATP + H2O + 4 H(+)(in) = ADP + phosphate + 5 H(+)(out). In terms of biological role, produces ATP from ADP in the presence of a proton gradient across the membrane. The catalytic sites are hosted primarily by the beta subunits. The protein is ATP synthase subunit beta, plastid (atpB) of Cuscuta gronovii (Common dodder).